An 827-amino-acid chain; its full sequence is Inactive rhomboid protein 2 (827 aa).

Positions 1–87 (MDSTDKNGES…GFRRQASLSQ (87 aa)) are disordered. Residues 1–380 (MDSTDKNGES…HRPYFTYWLT (380 aa)) lie on the Cytoplasmic side of the membrane. Serine 60 is modified (phosphoserine). Positions 64–77 (QRGRWQEGSSEKRP) are enriched in basic and acidic residues. Phosphoserine is present on residues serine 84, serine 88, serine 294, serine 296, and serine 299. Residues 381 to 401 (FVHIIITLLVICTYGIAPVGF) form a helical membrane-spanning segment. Over 402-631 (AQHVTTQLVL…PDQFYRLWLS (230 aa)) the chain is Lumenal. The helical transmembrane segment at 632–652 (LFLHAGVVHCLVSVVFQMTIL) threads the bilayer. Topologically, residues 653-663 (RDLEKLAGWHR) are cytoplasmic. Residues 664 to 684 (IAIIFILSGITGNLASAIFLP) form a helical membrane-spanning segment. The Lumenal segment spans residues 685-686 (YR). Residues 687 to 707 (AEVGPAGSQFGLLACLFVELF) traverse the membrane as a helical segment. Over 708 to 718 (QSWQLLERPWK) the chain is Cytoplasmic. Residues 719-739 (AFLNLSAIVLFLFICGLLPWI) traverse the membrane as a helical segment. Residues 740 to 744 (DNIAH) lie on the Lumenal side of the membrane. The helical transmembrane segment at 745 to 765 (IFGFLSGLLLAFAFLPYITFG) threads the bilayer. Over 766–773 (TSDKYRKR) the chain is Cytoplasmic. A helical membrane pass occupies residues 774-794 (ALILVSLLVFAGLFASLVIWL). The Lumenal portion of the chain corresponds to 795–827 (YVYPINWPWIEYLTCFPFTSRFCEKYELDQVLH).

Belongs to the peptidase S54 family. Interacts with EGF. Interacts (via cytoplasmic N-terminus) with FRMD8/iTAP; this interaction leads to mutual protein stabilization. Interacts with ADAM17/TACE. As to expression, detected in retina and spleen.

Its subcellular location is the endoplasmic reticulum membrane. The protein localises to the cell membrane. In terms of biological role, regulates ADAM17 protease, a sheddase of the epidermal growth factor (EGF) receptor ligands and TNF, thereby plays a role in sleep, cell survival, proliferation, migration and inflammation. Does not exhibit any protease activity on its own. In Canis lupus familiaris (Dog), this protein is Inactive rhomboid protein 2 (RHBDF2).